The following is a 224-amino-acid chain: N6-methyladenosine RNA demethylase ALKBH (224 aa).

Residues 93-222 enclose the Fe2OG dioxygenase domain; the sequence is LAQAAIVNFY…RINLNVRQMR (130 aa). The Fe cation site is built by His111, Asp113, and His178. A 2-oxoglutarate-binding site is contributed by Arg213.

It belongs to the alkB family. Requires Fe(2+) as cofactor.

It catalyses the reaction an N(6)-methyladenosine in mRNA + 2-oxoglutarate + O2 = an adenosine in mRNA + formaldehyde + succinate + CO2. In terms of biological role, RNA demethylase that regulates the stability of mRNAs through an m(6)A-dependent manner. M6A is a modification present at internal sites of mRNAs and some non-coding RNAs and plays a role in mRNA stability and processing. Demethylate m6A at position A1935 within the 3'UTR of transcription factor ZAP1 and plays an important role in C.parasitica development and virulence. Target mRNAs are primarily associated with amino-acid biosynthesis, 2-oxocarboxylic acid metabolism, and ABC transporters, as well as alpha-amino acid metabolism, small-molecule biosynthesis, and the sulfite reductase complex (NADPH). The chain is N6-methyladenosine RNA demethylase ALKBH from Cryphonectria parasitica (strain ATCC 38755 / EP155).